The chain runs to 239 residues: UPF0173 metal-dependent hydrolase rrnAC0300 (239 aa).

This sequence belongs to the UPF0173 family.

In Haloarcula marismortui (strain ATCC 43049 / DSM 3752 / JCM 8966 / VKM B-1809) (Halobacterium marismortui), this protein is UPF0173 metal-dependent hydrolase rrnAC0300.